The primary structure comprises 90 residues: Small ribosomal subunit protein bS16 (90 aa).

Belongs to the bacterial ribosomal protein bS16 family.

In Geobacillus thermodenitrificans (strain NG80-2), this protein is Small ribosomal subunit protein bS16.